A 446-amino-acid polypeptide reads, in one-letter code: Exodeoxyribonuclease 7 large subunit (446 aa).

It belongs to the XseA family. In terms of assembly, heterooligomer composed of large and small subunits.

The protein resides in the cytoplasm. It carries out the reaction Exonucleolytic cleavage in either 5'- to 3'- or 3'- to 5'-direction to yield nucleoside 5'-phosphates.. Functionally, bidirectionally degrades single-stranded DNA into large acid-insoluble oligonucleotides, which are then degraded further into small acid-soluble oligonucleotides. The protein is Exodeoxyribonuclease 7 large subunit of Streptococcus pyogenes serotype M6 (strain ATCC BAA-946 / MGAS10394).